The primary structure comprises 369 residues: Type 2 DNA topoisomerase 6 subunit A (369 aa).

In terms of domain architecture, Topo IIA-type catalytic spans 11–149 (KGDALAREKL…FHMRPEEDGA (139 aa)). Tyr-106 (O-(5'-phospho-DNA)-tyrosine intermediate) is an active-site residue. Residues Glu-202 and Asp-254 each contribute to the Mg(2+) site.

Belongs to the TOP6A family. As to quaternary structure, homodimer. Heterotetramer of two Top6A and two Top6B chains. Mg(2+) is required as a cofactor.

It catalyses the reaction ATP-dependent breakage, passage and rejoining of double-stranded DNA.. Relaxes both positive and negative superturns and exhibits a strong decatenase activity. In Methanosarcina mazei (strain ATCC BAA-159 / DSM 3647 / Goe1 / Go1 / JCM 11833 / OCM 88) (Methanosarcina frisia), this protein is Type 2 DNA topoisomerase 6 subunit A.